Here is a 179-residue protein sequence, read N- to C-terminus: Ubiquitin-conjugating enzyme E2 C (179 aa).

The tract at residues M1–V31 is disordered. The region spanning S30–I179 is the UBC core domain. Catalysis depends on C114, which acts as the Glycyl thioester intermediate.

Belongs to the ubiquitin-conjugating enzyme family. Component of the APC/C complex. Post-translationally, autoubiquitinated by the APC/C complex, leading to its degradation by the proteasome.

The catalysed reaction is S-ubiquitinyl-[E1 ubiquitin-activating enzyme]-L-cysteine + [E2 ubiquitin-conjugating enzyme]-L-cysteine = [E1 ubiquitin-activating enzyme]-L-cysteine + S-ubiquitinyl-[E2 ubiquitin-conjugating enzyme]-L-cysteine.. The enzyme catalyses S-ubiquitinyl-[E1 ubiquitin-activating enzyme]-L-cysteine + [acceptor protein]-L-lysine = [E1 ubiquitin-activating enzyme]-L-cysteine + N(6)-monoubiquitinyl-[acceptor protein]-L-lysine.. The protein operates within protein modification; protein ubiquitination. In terms of biological role, catalyzes the covalent attachment of ubiquitin to other proteins. Acts as an essential factor of the anaphase promoting complex/cyclosome (APC/C), a cell cycle-regulated ubiquitin ligase that controls progression through mitosis. Acts by initiating 'Lys-11'-linked polyubiquitin chains on APC/C substrates, leading to the degradation of APC/C substrates by the proteasome and promoting mitotic exit. This is Ubiquitin-conjugating enzyme E2 C (ube2c) from Xenopus laevis (African clawed frog).